A 261-amino-acid polypeptide reads, in one-letter code: Indole-3-glycerol phosphate synthase (261 aa).

Belongs to the TrpC family.

The catalysed reaction is 1-(2-carboxyphenylamino)-1-deoxy-D-ribulose 5-phosphate + H(+) = (1S,2R)-1-C-(indol-3-yl)glycerol 3-phosphate + CO2 + H2O. The protein operates within amino-acid biosynthesis; L-tryptophan biosynthesis; L-tryptophan from chorismate: step 4/5. This is Indole-3-glycerol phosphate synthase from Burkholderia pseudomallei (strain 1710b).